We begin with the raw amino-acid sequence, 168 residues long: Prolyl-tRNA synthetase associated domain-containing protein 1 (168 aa).

Belongs to the PRORSD1 family.

This is Prolyl-tRNA synthetase associated domain-containing protein 1 (prorsd1p) from Xenopus laevis (African clawed frog).